The following is a 263-amino-acid chain: Probable adenylate kinase 7, mitochondrial (263 aa).

The transit peptide at 1–30 directs the protein to the mitochondrion; sequence MAWLSRVRGVSPVTRLAAIRRSFGSAAALE. 72-77 lines the ATP pocket; sequence GAWRHV. An NMP region spans residues 92 to 121; that stretch reads SMGSLVRQELNPRSSLYKEIASAVNERKLV. AMP is bound by residues Arg-98, 119–121, 149–152, Gln-156, and Arg-206; these read KLV and GIPR. Gly-234 contributes to the ATP binding site.

This sequence belongs to the adenylate kinase family. In terms of assembly, monomer.

The protein localises to the mitochondrion. The enzyme catalyses AMP + ATP = 2 ADP. In terms of biological role, catalyzes the reversible transfer of the terminal phosphate group between ATP and AMP. Plays an important role in cellular energy homeostasis and in adenine nucleotide metabolism. This Arabidopsis thaliana (Mouse-ear cress) protein is Probable adenylate kinase 7, mitochondrial.